We begin with the raw amino-acid sequence, 168 residues long: Cyanate hydratase (168 aa).

Active-site residues include R94, E97, and S120.

Belongs to the cyanase family.

It carries out the reaction cyanate + hydrogencarbonate + 3 H(+) = NH4(+) + 2 CO2. Functionally, catalyzes the reaction of cyanate with bicarbonate to produce ammonia and carbon dioxide. This is Cyanate hydratase from Oryza sativa subsp. indica (Rice).